Here is a 343-residue protein sequence, read N- to C-terminus: GTPase Obg (343 aa).

The Obg domain occupies 1–159 (MKFIDEVKIQ…FELRLELRVL (159 aa)). An OBG-type G domain is found at 160–334 (ADVGLLGLPN…LIYAIMGHLQ (175 aa)). GTP-binding positions include 166–173 (GLPNAGKS), 191–195 (FTTLY), 213–216 (DIPG), 284–287 (NKVD), and 315–317 (SAL). Mg(2+) contacts are provided by S173 and T193.

The protein belongs to the TRAFAC class OBG-HflX-like GTPase superfamily. OBG GTPase family. In terms of assembly, monomer. Requires Mg(2+) as cofactor.

The protein localises to the cytoplasm. In terms of biological role, an essential GTPase which binds GTP, GDP and possibly (p)ppGpp with moderate affinity, with high nucleotide exchange rates and a fairly low GTP hydrolysis rate. Plays a role in control of the cell cycle, stress response, ribosome biogenesis and in those bacteria that undergo differentiation, in morphogenesis control. The sequence is that of GTPase Obg from Nitrosomonas europaea (strain ATCC 19718 / CIP 103999 / KCTC 2705 / NBRC 14298).